We begin with the raw amino-acid sequence, 42 residues long: Large ribosomal subunit protein bL36 (42 aa).

The protein belongs to the bacterial ribosomal protein bL36 family.

This chain is Large ribosomal subunit protein bL36, found in Ehrlichia chaffeensis (strain ATCC CRL-10679 / Arkansas).